A 221-amino-acid chain; its full sequence is Mediator of RNA polymerase II transcription subunit 19a (221 aa).

Residues 101 to 221 (PVELPPAEKG…DEVGAIRVAG (121 aa)) form a disordered region. Positions 142-152 (EHKKHKHKHKD) are enriched in basic residues. Basic and acidic residues predominate over residues 153 to 178 (RSKDKDKDKDRDRKKDKNGHHDSGDH). The segment covering 179-188 (SKKHHDKKRK) has biased composition (basic residues).

It belongs to the plant Mediator complex subunit 19 family. Component of the Mediator complex. Interacts with FIB2.

The protein resides in the nucleus. Component of the Mediator complex, a coactivator involved in the regulated transcription of nearly all RNA polymerase II-dependent genes. Mediator functions as a bridge to convey information from gene-specific regulatory proteins to the basal RNA polymerase II transcription machinery. The Mediator complex, having a compact conformation in its free form, is recruited to promoters by direct interactions with regulatory proteins and serves for the assembly of a functional preinitiation complex with RNA polymerase II and the general transcription factors. This chain is Mediator of RNA polymerase II transcription subunit 19a (MED19A), found in Arabidopsis thaliana (Mouse-ear cress).